The following is a 441-amino-acid chain: tRNA-2-methylthio-N(6)-dimethylallyladenosine synthase (441 aa).

An MTTase N-terminal domain is found at 2 to 117; sequence KGLYIKSYGC…LPELLVKAHR (116 aa). Positions 11, 47, 80, 157, 161, and 164 each coordinate [4Fe-4S] cluster. The Radical SAM core domain occupies 143–374; it reads KNQETSAFIS…QKLLREQQLA (232 aa).

The protein belongs to the methylthiotransferase family. MiaB subfamily. As to quaternary structure, monomer. It depends on [4Fe-4S] cluster as a cofactor.

The protein localises to the cytoplasm. The catalysed reaction is N(6)-dimethylallyladenosine(37) in tRNA + (sulfur carrier)-SH + AH2 + 2 S-adenosyl-L-methionine = 2-methylsulfanyl-N(6)-dimethylallyladenosine(37) in tRNA + (sulfur carrier)-H + 5'-deoxyadenosine + L-methionine + A + S-adenosyl-L-homocysteine + 2 H(+). Functionally, catalyzes the methylthiolation of N6-(dimethylallyl)adenosine (i(6)A), leading to the formation of 2-methylthio-N6-(dimethylallyl)adenosine (ms(2)i(6)A) at position 37 in tRNAs that read codons beginning with uridine. In Ehrlichia canis (strain Jake), this protein is tRNA-2-methylthio-N(6)-dimethylallyladenosine synthase.